Reading from the N-terminus, the 139-residue chain is Ribonuclease VapC3 (139 aa).

In terms of domain architecture, PINc spans 14–121 (EAIVLDTGAF…VATDDYTLQR (108 aa)). Aspartate 19 provides a ligand contact to Mg(2+).

The protein belongs to the PINc/VapC protein family. The cofactor is Mg(2+).

In terms of biological role, toxic component of a type II toxin-antitoxin (TA) system. An RNase. The sequence is that of Ribonuclease VapC3 from Aeropyrum pernix (strain ATCC 700893 / DSM 11879 / JCM 9820 / NBRC 100138 / K1).